The following is a 565-amino-acid chain: Adenine deaminase (565 aa).

This sequence belongs to the metallo-dependent hydrolases superfamily. Adenine deaminase family. Requires Mn(2+) as cofactor.

The catalysed reaction is adenine + H2O + H(+) = hypoxanthine + NH4(+). The polypeptide is Adenine deaminase (Lactobacillus delbrueckii subsp. bulgaricus (strain ATCC 11842 / DSM 20081 / BCRC 10696 / JCM 1002 / NBRC 13953 / NCIMB 11778 / NCTC 12712 / WDCM 00102 / Lb 14)).